We begin with the raw amino-acid sequence, 642 residues long: Threonine--tRNA ligase (642 aa).

A TGS domain is found at 1-61; it reads MPVITLPDGS…ETDAELSIIT (61 aa). Residues 243-534 are catalytic; the sequence is DHRKIGKQLD…LIEEYAGRFP (292 aa). Zn(2+) is bound by residues cysteine 334, histidine 385, and histidine 511.

Belongs to the class-II aminoacyl-tRNA synthetase family. As to quaternary structure, homodimer. Zn(2+) is required as a cofactor.

The protein localises to the cytoplasm. It carries out the reaction tRNA(Thr) + L-threonine + ATP = L-threonyl-tRNA(Thr) + AMP + diphosphate + H(+). In terms of biological role, catalyzes the attachment of threonine to tRNA(Thr) in a two-step reaction: L-threonine is first activated by ATP to form Thr-AMP and then transferred to the acceptor end of tRNA(Thr). Also edits incorrectly charged L-seryl-tRNA(Thr). The polypeptide is Threonine--tRNA ligase (Shewanella baltica (strain OS155 / ATCC BAA-1091)).